The primary structure comprises 112 residues: Putative pterin-4-alpha-carbinolamine dehydratase (112 aa).

It belongs to the pterin-4-alpha-carbinolamine dehydratase family.

It catalyses the reaction (4aS,6R)-4a-hydroxy-L-erythro-5,6,7,8-tetrahydrobiopterin = (6R)-L-erythro-6,7-dihydrobiopterin + H2O. The chain is Putative pterin-4-alpha-carbinolamine dehydratase from Shewanella sp. (strain ANA-3).